The following is a 485-amino-acid chain: Glutamyl-tRNA(Gln) amidotransferase subunit A 1 (485 aa).

Residues Lys79 and Ser154 each act as charge relay system in the active site. Ser178 functions as the Acyl-ester intermediate in the catalytic mechanism.

The protein belongs to the amidase family. GatA subfamily. As to quaternary structure, heterotrimer of A, B and C subunits.

The enzyme catalyses L-glutamyl-tRNA(Gln) + L-glutamine + ATP + H2O = L-glutaminyl-tRNA(Gln) + L-glutamate + ADP + phosphate + H(+). Allows the formation of correctly charged Gln-tRNA(Gln) through the transamidation of misacylated Glu-tRNA(Gln) in organisms which lack glutaminyl-tRNA synthetase. The reaction takes place in the presence of glutamine and ATP through an activated gamma-phospho-Glu-tRNA(Gln). This Clostridium acetobutylicum (strain ATCC 824 / DSM 792 / JCM 1419 / IAM 19013 / LMG 5710 / NBRC 13948 / NRRL B-527 / VKM B-1787 / 2291 / W) protein is Glutamyl-tRNA(Gln) amidotransferase subunit A 1 (gatA1).